A 480-amino-acid chain; its full sequence is Glycogen synthase (480 aa).

Lys15 serves as a coordination point for ADP-alpha-D-glucose.

It belongs to the glycosyltransferase 1 family. Bacterial/plant glycogen synthase subfamily.

It catalyses the reaction [(1-&gt;4)-alpha-D-glucosyl](n) + ADP-alpha-D-glucose = [(1-&gt;4)-alpha-D-glucosyl](n+1) + ADP + H(+). It participates in glycan biosynthesis; glycogen biosynthesis. Its function is as follows. Synthesizes alpha-1,4-glucan chains using ADP-glucose. In Desulforamulus reducens (strain ATCC BAA-1160 / DSM 100696 / MI-1) (Desulfotomaculum reducens), this protein is Glycogen synthase.